Reading from the N-terminus, the 968-residue chain is AP2-associated protein kinase 1 (968 aa).

An N-acetylmethionine modification is found at Met-1. The span at 1–11 (MKKFFDSRREQ) shows a compositional bias: basic and acidic residues. The disordered stretch occupies residues 1-25 (MKKFFDSRREQGGSGLGSGSSGGGG). The segment covering 12–25 (GGSGLGSGSSGGGG) has biased composition (gly residues). Ser-14 is subject to Phosphoserine. The 270-residue stretch at 46-315 (VTVDEVLAEG…QVSFFSFKLL (270 aa)) folds into the Protein kinase domain. Residues 52–60 (LAEGGFAIV) and Lys-74 contribute to the ATP site. The Proton acceptor role is filled by Asp-176. Phosphotyrosine is present on Tyr-234. Ser-235 carries the phosphoserine modification. Disordered stretches follow at residues 327–485 (SPIP…AQAP) and 578–640 (IQPP…AGHR). Phosphothreonine is present on residues Thr-354 and Thr-389. Arg-391 carries the post-translational modification Omega-N-methylarginine. Positions 437 to 448 (QAPPAPQQPPSA) are enriched in pro residues. 2 stretches are compositionally biased toward low complexity: residues 449-472 (PAQG…LKQQ) and 578-589 (IQPPQAQPATAS). Thr-613 is modified (phosphothreonine). Ser-625 carries the phosphoserine modification. Thr-627 bears the Phosphothreonine mark. Phosphoserine occurs at positions 630, 631, 644, and 657. Thr-660 is subject to Phosphothreonine. The tract at residues 671–708 (SLNKSKSATTTPSGSPRASQQNVYNPSEGSTWNPFDDD) is disordered. Over residues 679–703 (TTTPSGSPRASQQNVYNPSEGSTWN) the composition is skewed to polar residues. Tyr-694 bears the Phosphotyrosine mark. 4 positions are modified to phosphoserine: Ser-738, Ser-853, Ser-944, and Ser-945. The clathrin-binding domain (CBD) stretch occupies residues 830-967 (EKADVAVESL…SLLLVDQLID (138 aa)). Disordered stretches follow at residues 843–862 (LEPP…ASNR) and 929–952 (PVLI…ESSL). Over residues 851-862 (LPSQTESVASNR) the composition is skewed to polar residues. Low complexity predominate over residues 938–951 (GGHSRNSSGSSESS).

Belongs to the protein kinase superfamily. Ser/Thr protein kinase family. As to quaternary structure, interacts (via CBD domain) with clathrin. Interacts with AP-2 complex. Interacts with NUMB. Interacts with alpha-adaptin. Interacts with EPS15. Interacts with membrane-bound activated NOTCH1 but not with the inactive full-length form of NOTCH1. Preferentially interacts with monoubiquitinated activated NOTCH1 compared to the non-ubiquitinated form. Autophosphorylated.

The protein localises to the cell membrane. The protein resides in the membrane. Its subcellular location is the clathrin-coated pit. It localises to the presynapse. The catalysed reaction is L-seryl-[protein] + ATP = O-phospho-L-seryl-[protein] + ADP + H(+). It carries out the reaction L-threonyl-[protein] + ATP = O-phospho-L-threonyl-[protein] + ADP + H(+). With respect to regulation, stimulated by clathrin. In terms of biological role, regulates clathrin-mediated endocytosis by phosphorylating the AP2M1/mu2 subunit of the adaptor protein complex 2 (AP-2) which ensures high affinity binding of AP-2 to cargo membrane proteins during the initial stages of endocytosis. Preferentially, may phosphorylate substrates on threonine residues. Regulates phosphorylation of other AP-2 subunits as well as AP-2 localization and AP-2-mediated internalization of ligand complexes. Phosphorylates NUMB and regulates its cellular localization, promoting NUMB localization to endosomes. Binds to and stabilizes the activated form of NOTCH1, increases its localization in endosomes and regulates its transcriptional activity. In Sus scrofa (Pig), this protein is AP2-associated protein kinase 1 (AAK1).